The sequence spans 709 residues: Ribosomal RNA large subunit methyltransferase K/L (709 aa).

One can recognise a THUMP domain in the interval 43–154 (LAYRITLWTR…NGVITIAMNF (112 aa)).

This sequence belongs to the methyltransferase superfamily. RlmKL family.

It localises to the cytoplasm. The catalysed reaction is guanosine(2445) in 23S rRNA + S-adenosyl-L-methionine = N(2)-methylguanosine(2445) in 23S rRNA + S-adenosyl-L-homocysteine + H(+). It carries out the reaction guanosine(2069) in 23S rRNA + S-adenosyl-L-methionine = N(2)-methylguanosine(2069) in 23S rRNA + S-adenosyl-L-homocysteine + H(+). Its function is as follows. Specifically methylates the guanine in position 2445 (m2G2445) and the guanine in position 2069 (m7G2069) of 23S rRNA. The chain is Ribosomal RNA large subunit methyltransferase K/L from Shewanella baltica (strain OS185).